A 364-amino-acid polypeptide reads, in one-letter code: Lysophosphatidic acid receptor 1 (364 aa).

Over 1–50 the chain is Extracellular; it reads MAAAFTSSPVVSQPQFTAMNEQQCFSNESIAFFYNRSGKYLATEWNTVTK. 2 disulfide bridges follow: C24–C190 and C188–C195. N27 and N35 each carry an N-linked (GlcNAc...) asparagine glycan. An a 1-acyl-sn-glycero-3-phosphate-binding site is contributed by K39. Residues 51–75 traverse the membrane as a helical segment; the sequence is LVMGLGITVCIFIMLANLLVMVAIY. Residues 76-83 lie on the Cytoplasmic side of the membrane; the sequence is VNRRFHFP. The chain crosses the membrane as a helical span at residues 84-107; sequence IYYLMANLAAADFFAGLAYFYLMF. Residues 108 to 121 are Extracellular-facing; the sequence is NTGPNTRRLTVSTW. The chain crosses the membrane as a helical span at residues 122-144; it reads LLRQGLIDTSLTVSVANLLAIAI. 124–129 is a binding site for a 1-acyl-sn-glycero-3-phosphate; it reads RQGLID. The Cytoplasmic portion of the chain corresponds to 145–163; that stretch reads ERHITVFRMQLHARMSNRR. The helical transmembrane segment at 164-184 threads the bilayer; it reads VVVVIVVIWTMAIVMGAIPSV. Topologically, residues 185–204 are extracellular; the sequence is GWNCICDIENCSNMAPLYSD. The chain crosses the membrane as a helical span at residues 205-225; that stretch reads SYLVFWAIFNLVTFVVMVVLY. W210 provides a ligand contact to a 1-acyl-sn-glycero-3-phosphate. The Cytoplasmic portion of the chain corresponds to 226–255; the sequence is AHIFGYVRQRTMRMSRHSSGPRRNRDTMMS. A helical transmembrane segment spans residues 256 to 280; sequence LLKTVVIVLGAFIICWTPGLVLLLL. The Extracellular segment spans residues 281 to 294; sequence DVCCPQCDVLAYEK. Residues C284 and C287 are joined by a disulfide bond. A helical membrane pass occupies residues 295-315; that stretch reads FFLLLAEFNSAMNPIIYSYRD. Residues 316 to 364 lie on the Cytoplasmic side of the membrane; sequence KEMSATFRQILCCQRSENTSGPTEGSDRSASSLNHTILAGVHSNDHSVV. S341 carries the post-translational modification Phosphoserine. A Phosphothreonine modification is found at T351.

Belongs to the G-protein coupled receptor 1 family. As to quaternary structure, interacts with RALA and GRK2. Interacts with GNAQ and GNA13. Interacts with CD14; the interaction is enhanced by exposure to bacterial lipopolysaccharide (LPS). In terms of processing, N-glycosylated.

The protein localises to the cell surface. The protein resides in the cell membrane. It localises to the endosome. Its function is as follows. Receptor for lysophosphatidic acid (LPA). Plays a role in the reorganization of the actin cytoskeleton, cell migration, differentiation and proliferation, and thereby contributes to the responses to tissue damage and infectious agents. Activates downstream signaling cascades via the G(i)/G(o), G(12)/G(13), and G(q) families of heteromeric G proteins. Signaling inhibits adenylyl cyclase activity and decreases cellular cAMP levels. Signaling triggers an increase of cytoplasmic Ca(2+) levels. Activates RALA; this leads to the activation of phospholipase C (PLC) and the formation of inositol 1,4,5-trisphosphate. Signaling mediates activation of down-stream MAP kinases. Contributes to the regulation of cell shape. Promotes Rho-dependent reorganization of the actin cytoskeleton in neuronal cells and neurite retraction. Promotes the activation of Rho and the formation of actin stress fibers. Promotes formation of lamellipodia at the leading edge of migrating cells via activation of RAC1. Through its function as LPA receptor, plays a role in chemotaxis and cell migration, including responses to injury and wounding. Plays a role in triggering inflammation in response to bacterial lipopolysaccharide (LPS) via its interaction with CD14. Promotes cell proliferation in response to LPA. Inhibits the intracellular ciliogenesis pathway in response to LPA and through AKT1 activation. Required for normal skeleton development. May play a role in osteoblast differentiation. Required for normal brain development. Required for normal proliferation, survival and maturation of newly formed neurons in the adult dentate gyrus. Plays a role in pain perception and in the initiation of neuropathic pain. The protein is Lysophosphatidic acid receptor 1 (LPAR1) of Bos taurus (Bovine).